A 367-amino-acid polypeptide reads, in one-letter code: Aflatoxin B1 aldehyde reductase member 2 (367 aa).

Low complexity predominate over residues 1-31; that stretch reads MLRAASRAVGRAAVRSAQRSGTSVGRPLAMS. The interval 1–45 is disordered; sequence MLRAASRAVGRAAVRSAQRSGTSVGRPLAMSRPPPPRAASGAPLR. The N-terminal 46 residues, 1 to 46, are a transit peptide targeting the mitochondrion; it reads MLRAASRAVGRAAVRSAQRSGTSVGRPLAMSRPPPPRAASGAPLRP. A Phosphoserine modification is found at serine 40. Threonine 48 carries the phosphothreonine modification. Residue aspartate 80 participates in NADP(+) binding. Tyrosine 85 functions as the Proton donor in the catalytic mechanism. An N6-acetyllysine modification is found at lysine 136. Histidine 149 contributes to the substrate binding site. NADP(+) is bound by residues 179–180, glutamine 205, 234–244, and arginine 258; these read SN and NPLAGGLLTGK. Residue lysine 244 is modified to N6-succinyllysine. The substrate site is built by tyrosine 268 and arginine 271. Position 326–334 (326–334) interacts with NADP(+); sequence SSLEQLEQN. Arginine 367 contributes to the substrate binding site.

It belongs to the aldo/keto reductase family. Aldo/keto reductase 2 subfamily. In terms of assembly, homodimer. As to expression, expressed in liver, kidney, testis and brain with low levels in skeletal muscle, spleen, heart and lung.

It localises to the mitochondrion. The protein resides in the golgi apparatus. It is found in the cytoplasm. It catalyses the reaction 4-hydroxybutanoate + NADP(+) = succinate semialdehyde + NADPH + H(+). Inhibited by citrate, succinate and tartrate. Catalyzes the NADPH-dependent reduction of succinic semialdehyde to gamma-hydroxybutyrate. May have an important role in producing the neuromodulator gamma-hydroxybutyrate (GHB). Has broad substrate specificity. Can reduce the dialdehyde protein-binding form of aflatoxin B1 (AFB1) to the non-binding AFB1 dialcohol. May be involved in protection of liver against the toxic and carcinogenic effects of AFB1, a potent hepatocarcinogen. The protein is Aflatoxin B1 aldehyde reductase member 2 of Mus musculus (Mouse).